The chain runs to 124 residues: Class I hydrophobin 1 (124 aa).

An N-terminal signal peptide occupies residues 1 to 18 (MRFSIATVVLSLAAMVVA). 4 cysteine pairs are disulfide-bonded: C35-C85, C43-C79, C44-C63, and C86-C97.

The protein belongs to the fungal hydrophobin family.

The protein resides in the secreted. It is found in the cell wall. In terms of biological role, aerial growth, conidiation, and dispersal of filamentous fungi in the environment rely upon a capability of their secreting small amphipathic proteins called hydrophobins (HPBs) with low sequence identity. Class I can self-assemble into an outermost layer of rodlet bundles on aerial cell surfaces, conferring cellular hydrophobicity that supports fungal growth, development and dispersal; whereas Class II form highly ordered films at water-air interfaces through intermolecular interactions but contribute nothing to the rodlet structure. In Botryotinia fuckeliana, hydrophobins are not involved in conferring surface hydrophobicity to conidia and aerial hyphae and their function in sclerotia and fruiting bodies remains to be investigated. The polypeptide is Class I hydrophobin 1 (Bhp1) (Botryotinia fuckeliana (strain B05.10) (Noble rot fungus)).